Consider the following 473-residue polypeptide: Arginine biosynthesis bifunctional protein ArgJ, mitochondrial (473 aa).

The substrate site is built by threonine 201, lysine 230, threonine 241, glutamate 328, asparagine 468, and threonine 473. Catalysis depends on threonine 241, which acts as the Nucleophile.

The protein belongs to the ArgJ family. In terms of assembly, heterodimer of an alpha and a beta chain. Post-translationally, the alpha and beta chains are autoproteolytically processed from a single precursor protein within the mitochondrion.

The protein localises to the mitochondrion matrix. The catalysed reaction is N(2)-acetyl-L-ornithine + L-glutamate = N-acetyl-L-glutamate + L-ornithine. It catalyses the reaction L-glutamate + acetyl-CoA = N-acetyl-L-glutamate + CoA + H(+). The protein operates within amino-acid biosynthesis; L-arginine biosynthesis; L-ornithine and N-acetyl-L-glutamate from L-glutamate and N(2)-acetyl-L-ornithine (cyclic): step 1/1. It participates in amino-acid biosynthesis; L-arginine biosynthesis; N(2)-acetyl-L-ornithine from L-glutamate: step 1/4. Catalyzes two activities which are involved in the cyclic version of arginine biosynthesis: the synthesis of acetylglutamate from glutamate and acetyl-CoA, and of ornithine by transacetylation between acetylornithine and glutamate. This Paracoccidioides lutzii (strain ATCC MYA-826 / Pb01) (Paracoccidioides brasiliensis) protein is Arginine biosynthesis bifunctional protein ArgJ, mitochondrial.